A 108-amino-acid polypeptide reads, in one-letter code: Curli assembly protein CsgC (108 aa).

The signal sequence occupies residues 1 to 8 (MHTLLLLA).

It belongs to the CsgC/AgfC family.

Its subcellular location is the periplasm. Plays a role in the extracellular assembly of CsgA into thin aggregative fimbriae (Tafi) fibers. Assembly may also require CsgE. Tafi are thought to be assembled via an extracellular nucleation-precipitation (ENP) pathway, and possibly also via an intracellular non-CsgC-dependent pathway. This is Curli assembly protein CsgC from Salmonella arizonae (strain ATCC BAA-731 / CDC346-86 / RSK2980).